We begin with the raw amino-acid sequence, 281 residues long: Para-Rep C9 (281 aa).

In terms of domain architecture, CRESS-DNA virus Rep endonuclease spans 1–95 (MSAVNWVFTL…VAGPWSYGEL (95 aa)). Residues 7–10 (VFTL) carry the RCR-1 motif. The a divalent metal cation site is built by Glu-33 and His-39. The RCR-2 signature appears at 39 to 41 (HIQ). A Nuclear localization signal motif is present at residues 48–69 (KKAKMNTVKNIIGGNPHLEKMK). Residue Tyr-78 is the For DNA cleavage activity of the active site. The RCR-3 signature appears at 78–81 (YAQK). Glu-83 lines the a divalent metal cation pocket. Residues 95–101 (LLKKGSH) carry the Nuclear localization signal motif. 178–180 (GKS) contributes to the ATP binding site.

The protein belongs to the nanoviridea/circoviridae replication-associated protein family. Homooligomer (Potential). Rep binds to repeated DNA motifs (iterons). Mg(2+) is required as a cofactor. Requires Mn(2+) as cofactor.

The protein resides in the host nucleus. The catalysed reaction is ATP + H2O = ADP + phosphate + H(+). Initiates and terminates the replication only of its own subviral DNA molecule. The closed circular ssDNA genome is first converted to a superhelical dsDNA. Rep binds a specific hairpin at the genome origin of replication. Introduces an endonucleolytic nick within the intergenic region of the genome, thereby initiating the rolling circle replication (RCR). Following cleavage, binds covalently to the 5'-phosphate of DNA as a tyrosyl ester. The cleavage gives rise to a free 3'-OH that serves as a primer for the cellular DNA polymerase. The polymerase synthesizes the (+) strand DNA by rolling circle mechanism. After one round of replication, a Rep-catalyzed nucleotidyl transfer reaction releases a circular single-stranded virus genome, thereby terminating the replication. Displays origin-specific DNA cleavage, nucleotidyl transferase, ATPase and helicase activities. The protein is Para-Rep C9 (C9) of Faba bean necrotic yellows C9 alphasatellite (FBNYC9A).